Here is a 255-residue protein sequence, read N- to C-terminus: Aprataxin and PNK-like factor (255 aa).

Over residues 1-11 (MSATDASTADS) the composition is skewed to low complexity. 3 disordered regions span residues 1 to 117 (MSAT…VSSS), 131 to 168 (RRNP…FGNA), and 195 to 255 (RLRQ…DDYD). 3 stretches are compositionally biased toward basic and acidic residues: residues 12–22 (GAKRKSSEDIT), 40–64 (KSEE…KAEP), and 137–150 (RSAE…DYRR). 2 consecutive PBZ-type zinc fingers follow at residues 121–142 (TSCR…AEAH) and 161–182 (PACP…DYSH). The span at 207–218 (DDSGTDEEDEPF) shows a compositional bias: acidic residues. Over residues 221 to 230 (DNDRDADYRP) the composition is skewed to basic and acidic residues. The span at 234–244 (INEDEDDELEF) shows a compositional bias: acidic residues.

Belongs to the APLF family.

Displays apurinic-apyrimidinic (AP) endonuclease and 3'-5' exonuclease activities in vitro. In Drosophila melanogaster (Fruit fly), this protein is Aprataxin and PNK-like factor.